The primary structure comprises 72 residues: Translation initiation factor IF-1 (72 aa).

One can recognise an S1-like domain in the interval 1–72 (MSKQSSIEQD…TKGRIVFRYK (72 aa)).

It belongs to the IF-1 family. In terms of assembly, component of the 30S ribosomal translation pre-initiation complex which assembles on the 30S ribosome in the order IF-2 and IF-3, IF-1 and N-formylmethionyl-tRNA(fMet); mRNA recruitment can occur at any time during PIC assembly.

It is found in the cytoplasm. One of the essential components for the initiation of protein synthesis. Stabilizes the binding of IF-2 and IF-3 on the 30S subunit to which N-formylmethionyl-tRNA(fMet) subsequently binds. Helps modulate mRNA selection, yielding the 30S pre-initiation complex (PIC). Upon addition of the 50S ribosomal subunit IF-1, IF-2 and IF-3 are released leaving the mature 70S translation initiation complex. The sequence is that of Translation initiation factor IF-1 from Cytophaga hutchinsonii (strain ATCC 33406 / DSM 1761 / CIP 103989 / NBRC 15051 / NCIMB 9469 / D465).